The chain runs to 1423 residues: Interphotoreceptor matrix proteoglycan 2 (1423 aa).

A signal peptide spans 1 to 27 (MFAFLWKISLCLLVLGVITGDPQAVAA). Over 28-1289 (EEKQAKDASP…EYVSEPLVVG (1262 aa)) the chain is Extracellular. N150 carries N-linked (GlcNAc...) asparagine glycosylation. The region spanning 245-358 (TEQMIEFSIV…NPTVVYTISD (114 aa)) is the SEA 1 domain. Positions 265–273 (SDPDTAKYQ) are hyaluronan-binding motif involved in chondroitin sulfate A-binding. Residues N325 and N375 are each glycosylated (N-linked (GlcNAc...) asparagine). Disordered regions lie at residues 423-469 (AERP…DSEV), 522-559 (DSSD…DYTA), and 577-602 (TKRT…ADSL). A compositionally biased stretch (acidic residues) spans 523 to 532 (SSDEFEDTGL). The span at 537-546 (LLPSSPSSHL) shows a compositional bias: low complexity. Positions 577–587 (TKRTVTAEKEV) are enriched in basic and acidic residues. N676 is a glycosylation site (N-linked (GlcNAc...) asparagine). The segment at 886–907 (FEVSTDTSTEEQQSLDSSLADR) is disordered. Residues 889-902 (STDTSTEEQQSLDS) are compositionally biased toward polar residues. An SEA 2 domain is found at 1083 to 1196 (RALVVFFSLR…YSLDVESGEQ (114 aa)). Residues N1128, N1142, and N1160 are each glycosylated (N-linked (GlcNAc...) asparagine). 2 EGF-like domains span residues 1196–1234 (QADP…IDGL) and 1237–1279 (NSIC…EHCE). Disulfide bonds link C1200-C1211, C1205-C1222, C1240-C1253, C1247-C1263, and C1265-C1278. Positions 1266–1274 (RVGENWWYR) are hyaluronan-binding motif involved in chondroitin sulfate C-binding. Residues 1290–1310 (IAIASVAGFLLVASAVIFFLA) form a helical membrane-spanning segment. Topologically, residues 1311–1423 (RTLRDQYTKS…FVRQHQMKLL (113 aa)) are cytoplasmic. Residues 1322–1327 (TEDSQG) form a hyaluronan-binding motif involved in chondroitin sulfate C-binding region.

Highly glycosylated (N- and O-linked carbohydrates). Expressed in retina.

The protein resides in the photoreceptor outer segment membrane. It localises to the photoreceptor inner segment membrane. It is found in the secreted. Its subcellular location is the extracellular space. The protein localises to the extracellular matrix. The protein resides in the interphotoreceptor matrix. Its function is as follows. Chondroitin sulfate- and hyaluronan-binding proteoglycan involved in the organization of interphotoreceptor matrix. The chain is Interphotoreceptor matrix proteoglycan 2 (IMPG2) from Gallus gallus (Chicken).